Reading from the N-terminus, the 257-residue chain is Homeobox protein ceh-36 (257 aa).

The span at 33–49 (SATTSSTTMAPMAPNSE) shows a compositional bias: low complexity. Disordered stretches follow at residues 33 to 63 (SATTSSTTMAPMAPNSESGRRAGRRERTSFN) and 113 to 156 (DRNN…GTPE). The segment at residues 55–117 (GRRERTSFNR…NRRAKDRNNK (63 aa)) is a DNA-binding region (homeobox). The segment covering 123–137 (HPGSTSSRSSNGSPH) has biased composition (low complexity).

Belongs to the paired homeobox family. In terms of assembly, interacts with sox-2. In terms of tissue distribution, expressed in ASE and AWC chemosensory neurons. Expressed left-right asymmetrically in the embryo, in the grandmother cell and the mother cell to the MI pharyngeal motorneuron but in neither analogous precursors of the e3D neuron.

The protein localises to the nucleus. Functionally, probable transcription factor, acting as a progenitor identity factor regulating the development of lineally-related embryonic cells including glial, excretory and neuronal cells. Mediates chemosensory function of ASE and AWC neurons. In ASE neurons, required to diversify the fate of the ASEL neurons from the ASER neurons. Acts cell-autonomously to establish a neuronal left right asymmetry, possibly promoting asymmetric expression of the helix-loop-helix proteins ngn-1 and hlh-2. In cooperation with the transcription factor sox-2, required for the differentiation of AWC olfactory neurons. May regulate the expression of sox-2 in AWC olfactory neurons. This is Homeobox protein ceh-36 from Caenorhabditis elegans.